Here is a 115-residue protein sequence, read N- to C-terminus: Large ribosomal subunit protein bL19 (115 aa).

Belongs to the bacterial ribosomal protein bL19 family.

Functionally, this protein is located at the 30S-50S ribosomal subunit interface and may play a role in the structure and function of the aminoacyl-tRNA binding site. This Shouchella clausii (strain KSM-K16) (Alkalihalobacillus clausii) protein is Large ribosomal subunit protein bL19.